Reading from the N-terminus, the 434-residue chain is Trigger factor (434 aa).

Residues 161–246 enclose the PPIase FKBP-type domain; that stretch reads EDRVTVDFNG…LKKVEERELP (86 aa).

It belongs to the FKBP-type PPIase family. Tig subfamily.

The protein resides in the cytoplasm. It carries out the reaction [protein]-peptidylproline (omega=180) = [protein]-peptidylproline (omega=0). In terms of biological role, involved in protein export. Acts as a chaperone by maintaining the newly synthesized protein in an open conformation. Functions as a peptidyl-prolyl cis-trans isomerase. In Proteus mirabilis (strain HI4320), this protein is Trigger factor.